The primary structure comprises 198 residues: Ribonuclease HII (198 aa).

One can recognise an RNase H type-2 domain in the interval 11–198; it reads NLIAGVDEVG…GPVKRVLGLV (188 aa). Residues D17, E18, and D109 each coordinate a divalent metal cation.

The protein belongs to the RNase HII family. Mn(2+) serves as cofactor. Mg(2+) is required as a cofactor.

The protein resides in the cytoplasm. The enzyme catalyses Endonucleolytic cleavage to 5'-phosphomonoester.. Endonuclease that specifically degrades the RNA of RNA-DNA hybrids. This Yersinia enterocolitica serotype O:8 / biotype 1B (strain NCTC 13174 / 8081) protein is Ribonuclease HII.